Here is a 47-residue protein sequence, read N- to C-terminus: Large ribosomal subunit protein bL34 (47 aa).

It belongs to the bacterial ribosomal protein bL34 family.

The protein is Large ribosomal subunit protein bL34 of Nocardia farcinica (strain IFM 10152).